A 291-amino-acid polypeptide reads, in one-letter code: Lipoyl synthase (291 aa).

[4Fe-4S] cluster is bound by residues Cys-36, Cys-41, Cys-47, Cys-62, Cys-66, Cys-69, and Ser-275. Residues 48 to 264 (FSKKTATFLI…KEFAISIGFK (217 aa)) enclose the Radical SAM core domain.

Belongs to the radical SAM superfamily. Lipoyl synthase family. Requires [4Fe-4S] cluster as cofactor.

The protein localises to the cytoplasm. The enzyme catalyses [[Fe-S] cluster scaffold protein carrying a second [4Fe-4S](2+) cluster] + N(6)-octanoyl-L-lysyl-[protein] + 2 oxidized [2Fe-2S]-[ferredoxin] + 2 S-adenosyl-L-methionine + 4 H(+) = [[Fe-S] cluster scaffold protein] + N(6)-[(R)-dihydrolipoyl]-L-lysyl-[protein] + 4 Fe(3+) + 2 hydrogen sulfide + 2 5'-deoxyadenosine + 2 L-methionine + 2 reduced [2Fe-2S]-[ferredoxin]. Its pathway is protein modification; protein lipoylation via endogenous pathway; protein N(6)-(lipoyl)lysine from octanoyl-[acyl-carrier-protein]: step 2/2. In terms of biological role, catalyzes the radical-mediated insertion of two sulfur atoms into the C-6 and C-8 positions of the octanoyl moiety bound to the lipoyl domains of lipoate-dependent enzymes, thereby converting the octanoylated domains into lipoylated derivatives. This is Lipoyl synthase from Caldicellulosiruptor bescii (strain ATCC BAA-1888 / DSM 6725 / KCTC 15123 / Z-1320) (Anaerocellum thermophilum).